We begin with the raw amino-acid sequence, 547 residues long: Glucose-6-phosphate isomerase (547 aa).

Residue Glu-352 is the Proton donor of the active site. Residues His-383 and Lys-511 contribute to the active site.

It belongs to the GPI family.

The protein localises to the cytoplasm. It catalyses the reaction alpha-D-glucose 6-phosphate = beta-D-fructose 6-phosphate. The protein operates within carbohydrate biosynthesis; gluconeogenesis. It participates in carbohydrate degradation; glycolysis; D-glyceraldehyde 3-phosphate and glycerone phosphate from D-glucose: step 2/4. Functionally, catalyzes the reversible isomerization of glucose-6-phosphate to fructose-6-phosphate. This chain is Glucose-6-phosphate isomerase, found in Magnetococcus marinus (strain ATCC BAA-1437 / JCM 17883 / MC-1).